The following is a 145-amino-acid chain: 3-dehydroquinate dehydratase 2 (145 aa).

The active-site Proton acceptor is the Tyr-22. Substrate-binding residues include Asn-73, His-79, and Asp-86. The active-site Proton donor is His-101. Substrate is bound by residues 102-103 and Arg-112; that span reads IS.

Belongs to the type-II 3-dehydroquinase family. In terms of assembly, homododecamer.

The catalysed reaction is 3-dehydroquinate = 3-dehydroshikimate + H2O. It functions in the pathway metabolic intermediate biosynthesis; chorismate biosynthesis; chorismate from D-erythrose 4-phosphate and phosphoenolpyruvate: step 3/7. Functionally, catalyzes a trans-dehydration via an enolate intermediate. In Corynebacterium efficiens (strain DSM 44549 / YS-314 / AJ 12310 / JCM 11189 / NBRC 100395), this protein is 3-dehydroquinate dehydratase 2 (aroQ2).